A 424-amino-acid polypeptide reads, in one-letter code: MSNSKLFSDAKKVIPSGVNSPVRYFEPYPFFTKKANGAYIWDVDNRKLIDFCNGYGALLLGHRRKEIINSVSKQLTKGTLYCTPTEGETELAKLIIGNFPSIDKVRLMNTGGEATMTAIRLARGFTKKKKIIKFEGCYHGAHDSVLVKAGSGSAHNGISVSDGGLDEVSKNTLVVQYNNIEDLQKTIQKNKDIAGVIVEPILANMGLILPEKNFLSDLRKITKENNIPLIFDEVVTGFRVAPGGAQEHFGIKPDITTMAKALSNGFAISAVGGKKEIMDLLSPGGKVYQASTFAGNPISVSAAIASIKTINKLKNKLYSKLERFNLLFSTALDDMATDMGIPHQINFTASMFQIFFTNKPVTNYETSKKANAKKFQKLFRTLLKKGIFIAPSQFEVVFLSDAHTENDLNKTLDAYHLALKSVKN.

Lys-260 bears the N6-(pyridoxal phosphate)lysine mark.

The protein belongs to the class-III pyridoxal-phosphate-dependent aminotransferase family. HemL subfamily. Pyridoxal 5'-phosphate is required as a cofactor.

It is found in the cytoplasm. It carries out the reaction (S)-4-amino-5-oxopentanoate = 5-aminolevulinate. The protein operates within porphyrin-containing compound metabolism; protoporphyrin-IX biosynthesis; 5-aminolevulinate from L-glutamyl-tRNA(Glu): step 2/2. The protein is Glutamate-1-semialdehyde 2,1-aminomutase of Nitrosopumilus maritimus (strain SCM1).